The primary structure comprises 158 residues: Transcriptional repressor NrdR (158 aa).

A disordered region spans residues 1 to 20 (MRCPYCQSEDTQVKDSRPAE). A zinc finger spans residues 3-34 (CPYCQSEDTQVKDSRPAEDGAVIRRRRVCSVC). Over residues 11–20 (TQVKDSRPAE) the composition is skewed to basic and acidic residues. Positions 49–139 (LMVVKKSGRR…VYRNFSKAVD (91 aa)) constitute an ATP-cone domain.

It belongs to the NrdR family. Zn(2+) is required as a cofactor.

Functionally, negatively regulates transcription of bacterial ribonucleotide reductase nrd genes and operons by binding to NrdR-boxes. The sequence is that of Transcriptional repressor NrdR from Brucella anthropi (strain ATCC 49188 / DSM 6882 / CCUG 24695 / JCM 21032 / LMG 3331 / NBRC 15819 / NCTC 12168 / Alc 37) (Ochrobactrum anthropi).